Consider the following 106-residue polypeptide: Large ribosomal subunit protein eL42 (106 aa).

It belongs to the eukaryotic ribosomal protein eL42 family.

The protein is Large ribosomal subunit protein eL42 (RPL44) of Eremothecium gossypii (strain ATCC 10895 / CBS 109.51 / FGSC 9923 / NRRL Y-1056) (Yeast).